A 702-amino-acid polypeptide reads, in one-letter code: Polyribonucleotide nucleotidyltransferase (702 aa).

Positions 485 and 491 each coordinate Mg(2+). In terms of domain architecture, KH spans 552 to 611 (PKTSTLQIDPEKIRDVIGAGGKVINKIIADTGVKIDIKEDGLVYVSSAESEGVKEAVKII). Residues 621 to 689 (GEIYLGKVTK…SQGRINLSRK (69 aa)) form the S1 motif domain.

It belongs to the polyribonucleotide nucleotidyltransferase family. It depends on Mg(2+) as a cofactor.

The protein localises to the cytoplasm. It catalyses the reaction RNA(n+1) + phosphate = RNA(n) + a ribonucleoside 5'-diphosphate. Involved in mRNA degradation. Catalyzes the phosphorolysis of single-stranded polyribonucleotides processively in the 3'- to 5'-direction. The protein is Polyribonucleotide nucleotidyltransferase of Clostridium perfringens (strain 13 / Type A).